The chain runs to 96 residues: uncharacterized protein (96 aa).

Residues 38–91 (IEQLRKGTGLKIDDFARVLGVSVAMVKEWESRRVKPSSAELKLMRLIQANPALS) form the HTH cro/C1-type domain. The H-T-H motif DNA-binding region spans 49–68 (IDDFARVLGVSVAMVKEWES).

This is an uncharacterized protein from Escherichia coli O157:H7.